The following is a 1354-amino-acid chain: MSLTSRYTHFVPDSTITEILNDSNTPQILLHYANIVNGSTPVHFTSHHDNQVNWTVATLTRMSQYMIPDFMKLFPPLEPTLSLQPDCHCSFINLPRPEIKIPIEILSPPKPNYAKYHYDATTSRVFVNSKHEMYMDNFDVSQLIRDVAAIKTDSPSGNITKGLLKTFHDSIKLRALSPIMSMFHSLLSYRCPCCTSLNGMKKLNHLCFQYSSIYAFLCDMVRPYMCVPFFVDRLGVQILPGFKVSSQYPLLFFEAIELMHTVGLGNLSDSLSGWCFYTWLDRARIGVFREMFNRRGSITMLKSRVVSTGTIFRFSQREFVIESITEQRSTDISPTFEECSFSDSQYIQDNCYKPIYDITTTLDDVKCRWLDVALNYFYGAVLYVTGPVSLALEQSGMGRPGSLNLQFGGTTDVYVEGRWITIDVEPVSPFVSRIKQLADRELAKTKVNGDSLEHGFFEAQTTNSAGNTKETLAGLRSEIIEQHDSPQEGRLLASMAGIRVIDAMRRFNTTFRDHTEFLNEVRRPTKAGMRYQQQRRPRVIQMTGTEAQLGGWLLLNVYEPTYKRLGYTSSGKNIGDIRDMQAVLEASGQNGINSSVDIIGMDASTQNTHVTLLGSAAIKAYNPERIGFPKMFFQSTHNGGDANSRVLPTRVTRDGQTIPKDDDVKYNLPQLAIIYSLHGMHGPTILYDGYFAPAVLTSQTVFRSGWYNTSSQHTMLGSLVLLSLEEDIRNGYKNPYDGAPERSLIAKHWHSIRIIGRVLGDDILLKAFGPPTLTPDELREVTAEVCAEFEHRMELLGFLCERAFSDVMCEFLKQKGFGGAPHMFPDRLVLYTSERGNQAMTNPTTMYRVCDALIIEFNSRSRNIFNTCVSRRVLQTVCSTFALRMTSSGHLVRRSYASRKPYSRVAKVSDGILSELHNHKTVFRIIDYNVLGDHIAMIFLPMLWATNHILGCPPPAIVSISGANIPAASPLTYPSAAITTFWLTATSRRKIDFDSSATAYKKSMSDISNLTAVPLDIIFSFSNAMELSPLSINLDKDYDIDTLRTFGFIVGIMSDSLFPTPSATRAKIKSPVVDDWSRYADSLLNPTRVRSSHHGSEILAESNVVVPYELRYAHRGTAKVRQSMYELPVTDLEYGENTMTTLTQLSESLKVKPGTSKLLRDAMLAGEVFVIPTTHPVTLPCPSFDAHGYGHIIPPNSLQSLLLTHLGLPVSSASYTSSFAKTILSDGKLPGSAEAYLSLYQETYKKGPSAVAYLKDAIGFSDSSMSALERLASNGLYGISGASFAYNPRGGFFFRFDQDNADRFGTSLSPSPTIRRLDIVHMMFTMLMYPTTMVSQNQWMMVRFGRSFSRLARR.

It carries out the reaction RNA(n) + a ribonucleoside 5'-triphosphate = RNA(n+1) + diphosphate. RNA-directed RNA polymerase that is involved in transcription and genome replication. Following infection, it catalyzes the synthesis of fully conservative plus strands. After core assembly, which consists in recruitment of one capped plus-strand for each genomic segments and polymerase complexes, the polymerase switches mode and catalyzes the synthesis of complementary minus-strands. This chain is RNA-directed RNA polymerase VP1, found in Cryphonectria parasitica mycoreovirus 1 (strain 9B21) (CpMYRV-1).